A 1447-amino-acid chain; its full sequence is DNA topoisomerase 2 (1447 aa).

ATP is bound by residues Asn72, Asn101, 129-131, and 142-149; these read SSN and GRNGYGAK. Residues 323–325 are interaction with DNA; it reads KKK. ATP is bound at residue 357-359; it reads QTK. The 118-residue stretch at 435–552 folds into the Toprim domain; that stretch reads CTLILTEGDS…ELLRLPFLEE (118 aa). Mg(2+) contacts are provided by Glu441, Asp521, and Asp523. In terms of domain architecture, Topo IIA-type catalytic spans 695-1169; it reads IPSLVDGLKP…TPEMLWLDDL (475 aa). The O-(5'-phospho-DNA)-tyrosine intermediate role is filled by Tyr785. The tract at residues 972 to 981 is interaction with DNA; sequence KLTTTLSTNQ. Disordered regions lie at residues 1079–1110, 1183–1231, and 1246–1447; these read EDAE…EVDP, ERAE…DGEP, and AAAK…DFNC. The segment covering 1081 to 1094 has biased composition (acidic residues); that stretch reads AEQADEEDEEEEEA. The segment covering 1255 to 1281 has biased composition (basic and acidic residues); sequence KEPKKPKEPKEPKVKKEPKGKQIKAEP. The span at 1283 to 1293 shows a compositional bias: acidic residues; it reads ASGDEVDEFDA. Ser1284 is subject to Phosphoserine. Basic and acidic residues-rich tracts occupy residues 1310-1325 and 1332-1359; these read VKKE…KKEN and SKID…ERPG. Position 1344 is a phosphoserine (Ser1344). The residue at position 1352 (Thr1352) is a Phosphothreonine. Residues Ser1374, Ser1385, Ser1392, and Ser1396 each carry the phosphoserine modification. A compositionally biased stretch (acidic residues) spans 1374-1394; sequence SDEEEDGGNVGSDDDGNASDD. Residues 1395 to 1408 show a composition bias toward basic and acidic residues; it reads DSPKRPAKRGREDE. A compositionally biased stretch (basic residues) spans 1413–1423; that stretch reads AKKKAPPKKRR. Residues 1427-1447 show a composition bias toward acidic residues; that stretch reads ESDDDDIEIDEDDDDDSDFNC.

The protein belongs to the type II topoisomerase family. In terms of assembly, homodimer. Interacts with mod(mdg4). Interacts with barr. Interacts with ph-p. Interacts with mle; the interaction mediates association with the MSL dosage compensation complex. Mg(2+) serves as cofactor. It depends on Mn(2+) as a cofactor. The cofactor is Ca(2+). Post-translationally, phosphorylated. Phosphorylation by casein kinase II enhances ATPase activity.

It is found in the nucleus. Its subcellular location is the chromosome. The protein resides in the cytoplasm. It carries out the reaction ATP-dependent breakage, passage and rejoining of double-stranded DNA.. In terms of biological role, control of topological states of DNA by transient breakage and subsequent rejoining of DNA strands. Topoisomerase II makes double-strand breaks. Essential during mitosis and meiosis for proper segregation of daughter chromosomes. During meiosis, it disrupts heterochromatic connections between achiasmate and chiasmate homologs after spindle assembly so that chromosomes can separate at prometaphase I. During mitosis, it functions in the separation of sister chromatids by establishing amphitelic kinetochore attachments in mitotic spindles. May have a role in chromatin condensation and chromosome structure. May be involved in X-chromosome dosage compensation, perhaps by modifying the topological state of compensated genes. Regulates activity of the gypsy chromatin insulator complex by binding to mod(mdg4) and preventing its degradation. This Drosophila melanogaster (Fruit fly) protein is DNA topoisomerase 2.